The primary structure comprises 275 residues: MISPSTKLYGLIGYPLGHSISFYIHNAAFRALSIDALYLNIPIEPEFFSKAILGIKYLPIYGLNVTIPHKESIIEFLDEISEISNILGAVNTVYRENHKWKGDNTDFGGFLKTLEDLNLSSDFSCLILGAGGAARAVIYAVLEYGFKEVYLTNRTYERAEKIAVEVKKNKNFEIKVIPWEDREKISEKVILINTTSIGLDGKETPWNGDFKKLVFVYDIIYNPKETPLLKLAKENNVPYKNGLDMLIYQACLSWEKWFGFVGPFEVMKREAEKLL.

Shikimate is bound by residues 19–21 and Thr-66; that span reads SIS. Lys-70 functions as the Proton acceptor in the catalytic mechanism. An NADP(+)-binding site is contributed by Glu-82. Residues Asn-91 and Asp-106 each contribute to the shikimate site. NADP(+)-binding positions include 129 to 133, 153 to 158, and Ile-219; these read GAGGA and NRTYER. Tyr-221 contacts shikimate. Gly-242 provides a ligand contact to NADP(+).

It belongs to the shikimate dehydrogenase family. As to quaternary structure, homodimer.

It carries out the reaction shikimate + NADP(+) = 3-dehydroshikimate + NADPH + H(+). Its pathway is metabolic intermediate biosynthesis; chorismate biosynthesis; chorismate from D-erythrose 4-phosphate and phosphoenolpyruvate: step 4/7. In terms of biological role, involved in the biosynthesis of the chorismate, which leads to the biosynthesis of aromatic amino acids. Catalyzes the reversible NADPH linked reduction of 3-dehydroshikimate (DHSA) to yield shikimate (SA). The polypeptide is Shikimate dehydrogenase (NADP(+)) (Dictyoglomus turgidum (strain DSM 6724 / Z-1310)).